The sequence spans 160 residues: Cytochrome b6-f complex subunit 4 (160 aa).

The next 3 helical transmembrane spans lie at 36-56 (LLYI…GLSV), 95-115 (LLGV…PFIE), and 131-151 (TVFL…TFPI).

Belongs to the cytochrome b family. PetD subfamily. The 4 large subunits of the cytochrome b6-f complex are cytochrome b6, subunit IV (17 kDa polypeptide, petD), cytochrome f and the Rieske protein, while the 4 small subunits are petG, petL, petM and petN. The complex functions as a dimer.

The protein localises to the plastid. Its subcellular location is the chloroplast thylakoid membrane. Its function is as follows. Component of the cytochrome b6-f complex, which mediates electron transfer between photosystem II (PSII) and photosystem I (PSI), cyclic electron flow around PSI, and state transitions. The polypeptide is Cytochrome b6-f complex subunit 4 (Stigeoclonium helveticum (Green alga)).